The primary structure comprises 185 residues: Ribosome-recycling factor (185 aa).

This sequence belongs to the RRF family.

It is found in the cytoplasm. Its function is as follows. Responsible for the release of ribosomes from messenger RNA at the termination of protein biosynthesis. May increase the efficiency of translation by recycling ribosomes from one round of translation to another. This Campylobacter jejuni (strain RM1221) protein is Ribosome-recycling factor.